A 419-amino-acid chain; its full sequence is UDP-N-acetylglucosamine 1-carboxyvinyltransferase (419 aa).

Phosphoenolpyruvate is bound at residue 22 to 23 (KN). Arginine 92 contributes to the UDP-N-acetyl-alpha-D-glucosamine binding site. Catalysis depends on cysteine 116, which acts as the Proton donor. Cysteine 116 is modified (2-(S-cysteinyl)pyruvic acid O-phosphothioketal). Residues aspartate 307 and valine 329 each contribute to the UDP-N-acetyl-alpha-D-glucosamine site.

The protein belongs to the EPSP synthase family. MurA subfamily.

The protein localises to the cytoplasm. It catalyses the reaction phosphoenolpyruvate + UDP-N-acetyl-alpha-D-glucosamine = UDP-N-acetyl-3-O-(1-carboxyvinyl)-alpha-D-glucosamine + phosphate. It functions in the pathway cell wall biogenesis; peptidoglycan biosynthesis. Its function is as follows. Cell wall formation. Adds enolpyruvyl to UDP-N-acetylglucosamine. The protein is UDP-N-acetylglucosamine 1-carboxyvinyltransferase of Pseudothermotoga lettingae (strain ATCC BAA-301 / DSM 14385 / NBRC 107922 / TMO) (Thermotoga lettingae).